The sequence spans 541 residues: Zinc finger protein 503 (541 aa).

Residues 1 to 18 (MSNSPLGSGSRISHFTTE) show a composition bias toward polar residues. 2 disordered regions span residues 1 to 49 (MSNS…QAGR) and 97 to 255 (TCSQ…SSSV). Basic and acidic residues predominate over residues 137 to 157 (AEDKSSFKPYSKHPDKKDQSA). Over residues 236 to 255 (SLSAAPSPTPASSSSSSSSV) the composition is skewed to low complexity. A C2H2-type zinc finger spans residues 411 to 439 (HVCNWVSATGPCDKRFSSSEELLGHLRTH). The disordered stretch occupies residues 474–511 (GASPGPLTLRSPHHHPLGLSSSRYHPYSKSPLPSGGAP).

It belongs to the Elbow/Noc family.

Its subcellular location is the nucleus. May function as a transcriptional repressor. The sequence is that of Zinc finger protein 503 (znf503) from Xenopus tropicalis (Western clawed frog).